A 389-amino-acid polypeptide reads, in one-letter code: Aspartyl protease UND (389 aa).

Positions 1–19 (MKTTMNFVFLFFLPLLINA) are cleaved as a signal peptide. The region spanning 58-383 (FMAEIHFGSP…DLSAKTAYIN (326 aa)) is the Peptidase A1 domain. D76 is an active-site residue. An intrachain disulfide couples C86 to C92. The N-linked (GlcNAc...) asparagine glycan is linked to N238. The active site involves D268. A disulfide bridge links C304 with C346.

Belongs to the peptidase A1 family.

In terms of biological role, probable aspartic protease activated by the transcription factor MYB80. May participate in the regulation of the timing of tapetal programmed cell death (PCD) which is critical for pollen development. In Arabidopsis thaliana (Mouse-ear cress), this protein is Aspartyl protease UND.